The following is a 63-amino-acid chain: Cytochrome c oxidase subunit 5A, mitochondrial (63 aa).

This sequence belongs to the cytochrome c oxidase subunit 5A family. In terms of assembly, component of the cytochrome c oxidase (complex IV, CIV), a multisubunit enzyme composed of a catalytic core of 3 subunits and several supernumerary subunits. The complex exists as a monomer or a dimer and forms supercomplexes (SCs) in the inner mitochondrial membrane with ubiquinol-cytochrome c oxidoreductase (cytochrome b-c1 complex, complex III, CIII).

It localises to the mitochondrion inner membrane. It participates in energy metabolism; oxidative phosphorylation. Its function is as follows. Component of the cytochrome c oxidase, the last enzyme in the mitochondrial electron transport chain which drives oxidative phosphorylation. The respiratory chain contains 3 multisubunit complexes succinate dehydrogenase (complex II, CII), ubiquinol-cytochrome c oxidoreductase (cytochrome b-c1 complex, complex III, CIII) and cytochrome c oxidase (complex IV, CIV), that cooperate to transfer electrons derived from NADH and succinate to molecular oxygen, creating an electrochemical gradient over the inner membrane that drives transmembrane transport and the ATP synthase. Cytochrome c oxidase is the component of the respiratory chain that catalyzes the reduction of oxygen to water. Electrons originating from reduced cytochrome c in the intermembrane space (IMS) are transferred via the dinuclear copper A center (CU(A)) of subunit 2 and heme A of subunit 1 to the active site in subunit 1, a binuclear center (BNC) formed by heme A3 and copper B (CU(B)). The BNC reduces molecular oxygen to 2 water molecules using 4 electrons from cytochrome c in the IMS and 4 protons from the mitochondrial matrix. In Manduca sexta (Tobacco hawkmoth), this protein is Cytochrome c oxidase subunit 5A, mitochondrial (COVA).